The chain runs to 73 residues: U3-agatoxin-Ao1k (73 aa).

Residues 1–20 form the signal peptide; that stretch reads MRTIISLLLLSAMVFAVIEA. Positions 21–34 are excised as a propeptide; sequence ISLEEGLQLFEGER. Intrachain disulfides connect Cys36-Cys52, Cys43-Cys57, Cys51-Cys67, and Cys59-Cys65. Residue Ser71 is modified to Serine amide.

It belongs to the neurotoxin 07 (Beta/delta-agtx) family. 03 (aga-4) subfamily. Aga sub-subfamily. In terms of tissue distribution, expressed by the venom gland.

It is found in the secreted. Its function is as follows. Insecticidal neurotoxin that modulates the insect Nav channel (DmNaV1/tipE (para/tipE)) in a unique manner, with both the activation and inactivation processes being affected. The voltage dependence of activation is shifted toward more hyperpolarized potentials (analogous to site 4 toxins) and a non-inactivating persistent sodium current is induced (site 3-like action). Interestingly, both effects take place in a voltage-dependent manner, producing a bell-shaped curve between -80 and 0 mV. Compared to beta/delta-agatoxin-1 to -3, this toxin appears to affect the insect sodium channel only weakly. This chain is U3-agatoxin-Ao1k, found in Agelena orientalis (Funnel-web spider).